A 290-amino-acid polypeptide reads, in one-letter code: Shikimate dehydrogenase (NADP(+)) (290 aa).

Residues 18-20 (SYS) and Thr66 each bind shikimate. The active-site Proton acceptor is Lys70. The shikimate site is built by Asn91 and Asp106. NADP(+)-binding positions include 130 to 134 (GNGGA) and Met230. Shikimate is bound at residue Tyr232. An NADP(+)-binding site is contributed by Gly253.

Belongs to the shikimate dehydrogenase family. Homodimer.

It catalyses the reaction shikimate + NADP(+) = 3-dehydroshikimate + NADPH + H(+). It participates in metabolic intermediate biosynthesis; chorismate biosynthesis; chorismate from D-erythrose 4-phosphate and phosphoenolpyruvate: step 4/7. Involved in the biosynthesis of the chorismate, which leads to the biosynthesis of aromatic amino acids. Catalyzes the reversible NADPH linked reduction of 3-dehydroshikimate (DHSA) to yield shikimate (SA). The polypeptide is Shikimate dehydrogenase (NADP(+)) (Prosthecochloris aestuarii (strain DSM 271 / SK 413)).